The sequence spans 160 residues: MSEAKKYVMTYEGVKKLEEELEFLKTVKRKEITEKIKVALSFGDLSENSEYDEAKNEQAFVEGRIIQLENMLKNASIVDENEVPKDVVSVGSIVKVKDYEFDEEVEYIIVGSAEADPMNNKISNESPVGHGLIGKKAGDIIEVAVPDGVSKYEILEVNRA.

The stretch at 12-76 (EGVKKLEEEL…QLENMLKNAS (65 aa)) forms a coiled coil.

Belongs to the GreA/GreB family.

Necessary for efficient RNA polymerase transcription elongation past template-encoded arresting sites. The arresting sites in DNA have the property of trapping a certain fraction of elongating RNA polymerases that pass through, resulting in locked ternary complexes. Cleavage of the nascent transcript by cleavage factors such as GreA or GreB allows the resumption of elongation from the new 3'terminus. GreA releases sequences of 2 to 3 nucleotides. This Clostridium botulinum (strain Hall / ATCC 3502 / NCTC 13319 / Type A) protein is Transcription elongation factor GreA.